A 125-amino-acid polypeptide reads, in one-letter code: MARIVGVELPNNKKVWVALTYIYGIGRSRSFEILKNTGVDPDKRVGELTDEEISKITKYIQDHFKVEGELRSEVERNIRRLIEIGCYRGIRHKLGLPVRGQKTRSNARTRKGPRPSRIKTKKKSS.

Residues 97–125 (PVRGQKTRSNARTRKGPRPSRIKTKKKSS) are disordered. Over residues 101-125 (QKTRSNARTRKGPRPSRIKTKKKSS) the composition is skewed to basic residues.

The protein belongs to the universal ribosomal protein uS13 family. Part of the 30S ribosomal subunit. Forms a loose heterodimer with protein S19. Forms two bridges to the 50S subunit in the 70S ribosome.

In terms of biological role, located at the top of the head of the 30S subunit, it contacts several helices of the 16S rRNA. In the 70S ribosome it contacts the 23S rRNA (bridge B1a) and protein L5 of the 50S subunit (bridge B1b), connecting the 2 subunits; these bridges are implicated in subunit movement. Contacts the tRNAs in the A and P-sites. This is Small ribosomal subunit protein uS13 from Thermotoga neapolitana (strain ATCC 49049 / DSM 4359 / NBRC 107923 / NS-E).